Reading from the N-terminus, the 198-residue chain is FMN-dependent NADH:quinone oxidoreductase (198 aa).

Ser10 is an FMN binding site.

Belongs to the azoreductase type 1 family. As to quaternary structure, homodimer. It depends on FMN as a cofactor.

The catalysed reaction is 2 a quinone + NADH + H(+) = 2 a 1,4-benzosemiquinone + NAD(+). It catalyses the reaction N,N-dimethyl-1,4-phenylenediamine + anthranilate + 2 NAD(+) = 2-(4-dimethylaminophenyl)diazenylbenzoate + 2 NADH + 2 H(+). Quinone reductase that provides resistance to thiol-specific stress caused by electrophilic quinones. In terms of biological role, also exhibits azoreductase activity. Catalyzes the reductive cleavage of the azo bond in aromatic azo compounds to the corresponding amines. The polypeptide is FMN-dependent NADH:quinone oxidoreductase (Paraburkholderia phymatum (strain DSM 17167 / CIP 108236 / LMG 21445 / STM815) (Burkholderia phymatum)).